The following is a 238-amino-acid chain: Probable succinyl-CoA:3-ketoacid coenzyme A transferase subunit A (238 aa).

24–30 (GGFGLCG) contributes to the CoA binding site.

The protein belongs to the 3-oxoacid CoA-transferase subunit A family. Heterodimer of a subunit A and a subunit B.

The enzyme catalyses a 3-oxo acid + succinyl-CoA = a 3-oxoacyl-CoA + succinate. The sequence is that of Probable succinyl-CoA:3-ketoacid coenzyme A transferase subunit A (scoA) from Bacillus subtilis (strain 168).